Consider the following 212-residue polypeptide: Peptide methionine sulfoxide reductase MsrA (212 aa).

Polar residues predominate over residues 1–14 (MNSIDKTQRITQSD). The disordered stretch occupies residues 1 to 21 (MNSIDKTQRITQSDALPGRST). Cys-52 is an active-site residue.

Belongs to the MsrA Met sulfoxide reductase family.

It catalyses the reaction L-methionyl-[protein] + [thioredoxin]-disulfide + H2O = L-methionyl-(S)-S-oxide-[protein] + [thioredoxin]-dithiol. It carries out the reaction [thioredoxin]-disulfide + L-methionine + H2O = L-methionine (S)-S-oxide + [thioredoxin]-dithiol. Has an important function as a repair enzyme for proteins that have been inactivated by oxidation. Catalyzes the reversible oxidation-reduction of methionine sulfoxide in proteins to methionine. This is Peptide methionine sulfoxide reductase MsrA from Pectobacterium atrosepticum (strain SCRI 1043 / ATCC BAA-672) (Erwinia carotovora subsp. atroseptica).